We begin with the raw amino-acid sequence, 231 residues long: Large ribosomal subunit protein uL1 (231 aa).

It belongs to the universal ribosomal protein uL1 family. As to quaternary structure, part of the 50S ribosomal subunit.

Binds directly to 23S rRNA. The L1 stalk is quite mobile in the ribosome, and is involved in E site tRNA release. Its function is as follows. Protein L1 is also a translational repressor protein, it controls the translation of the L11 operon by binding to its mRNA. The chain is Large ribosomal subunit protein uL1 from Gluconacetobacter diazotrophicus (strain ATCC 49037 / DSM 5601 / CCUG 37298 / CIP 103539 / LMG 7603 / PAl5).